The sequence spans 81 residues: 8.6 kDa transglutaminase substrate (81 aa).

Multimeric. Hemolymph; Hemocyte.

The polypeptide is 8.6 kDa transglutaminase substrate (Tachypleus tridentatus (Japanese horseshoe crab)).